We begin with the raw amino-acid sequence, 347 residues long: Protein RecA (347 aa).

65-72 (GPESSGKT) contacts ATP. A compositionally biased stretch (basic and acidic residues) spans 327–336 (KFEPTELSRE). Residues 327–347 (KFEPTELSREEGDEDTLEDAM) form a disordered region. Acidic residues predominate over residues 337–347 (EGDEDTLEDAM).

The protein belongs to the RecA family.

It is found in the cytoplasm. Its function is as follows. Can catalyze the hydrolysis of ATP in the presence of single-stranded DNA, the ATP-dependent uptake of single-stranded DNA by duplex DNA, and the ATP-dependent hybridization of homologous single-stranded DNAs. It interacts with LexA causing its activation and leading to its autocatalytic cleavage. This chain is Protein RecA, found in Xylella fastidiosa (strain M12).